The chain runs to 573 residues: Potassium-transporting ATPase potassium-binding subunit (573 aa).

10 helical membrane-spanning segments follow: residues 6-26 (ILFA…GSYI), 66-86 (FFSL…ILLL), 135-155 (ALAV…IALI), 177-197 (VFWI…FQGV), 257-277 (IQMV…GKWV), 283-303 (GWLI…VMTI), 382-402 (IFGG…LAVF), 428-448 (MFAL…AAVI), 493-513 (ITIA…VIML), and 537-557 (FIFA…TIFP).

Belongs to the KdpA family. The system is composed of three essential subunits: KdpA, KdpB and KdpC.

It localises to the cell inner membrane. In terms of biological role, part of the high-affinity ATP-driven potassium transport (or Kdp) system, which catalyzes the hydrolysis of ATP coupled with the electrogenic transport of potassium into the cytoplasm. This subunit binds the periplasmic potassium ions and delivers the ions to the membrane domain of KdpB through an intramembrane tunnel. This is Potassium-transporting ATPase potassium-binding subunit from Francisella tularensis subsp. mediasiatica (strain FSC147).